The following is a 603-amino-acid chain: Elongation factor 4 (603 aa).

The tr-type G domain occupies 2 to 184 (NHIRNFSIIA…AVIARVPPPK (183 aa)). Residues 14–19 (DHGKST) and 131–134 (NKMD) contribute to the GTP site.

Belongs to the TRAFAC class translation factor GTPase superfamily. Classic translation factor GTPase family. LepA subfamily.

Its subcellular location is the cell inner membrane. The catalysed reaction is GTP + H2O = GDP + phosphate + H(+). Its function is as follows. Required for accurate and efficient protein synthesis under certain stress conditions. May act as a fidelity factor of the translation reaction, by catalyzing a one-codon backward translocation of tRNAs on improperly translocated ribosomes. Back-translocation proceeds from a post-translocation (POST) complex to a pre-translocation (PRE) complex, thus giving elongation factor G a second chance to translocate the tRNAs correctly. Binds to ribosomes in a GTP-dependent manner. This is Elongation factor 4 from Polaromonas sp. (strain JS666 / ATCC BAA-500).